The following is a 308-amino-acid chain: MPMMNTNVGFTRNTCFDDDFRSGRFVVRFEPLIEENAADQGAEIVNQNFLTGDERLLKLLFSSKTNLSHKYTTMKELVMKWNHFRDRFQREIVGRNSRGAALSRAEILQILLDIAQEKTGSTITRAYPRDVSWFFAQLVLGDVDTFVRAVKPAGLITSLTELPGLTTGTVGEGGQNDLYDLVDPSSYICDVHLRRDRSCEGKSIFLIAVPKQDPPLALENFRGLELKVIITDSSLQQVVRQTVADVPIESPRFAVAHLGQCFSRTLAHASFGGWKLYDARLLSRSIEALLPHVPDERPTPLKRIRLLV.

This is an uncharacterized protein from Ictalurid herpesvirus 1 (strain Auburn) (IcHV-1).